The following is a 40-amino-acid chain: Putative NAD(P)-dependent glyceraldehyde-3-phosphate dehydrogenase PS5 (40 aa).

In Pinus strobus (Eastern white pine), this protein is Putative NAD(P)-dependent glyceraldehyde-3-phosphate dehydrogenase PS5.